Consider the following 84-residue polypeptide: Small ribosomal subunit protein bS20 (84 aa).

Over residues 62–72 (KNKARRLKSRA) the composition is skewed to basic residues. A disordered region spans residues 62 to 84 (KNKARRLKSRAARWSNSATAASR). Polar residues predominate over residues 75–84 (WSNSATAASR).

It belongs to the bacterial ribosomal protein bS20 family.

Its function is as follows. Binds directly to 16S ribosomal RNA. This Mycoplasmoides gallisepticum (strain R(low / passage 15 / clone 2)) (Mycoplasma gallisepticum) protein is Small ribosomal subunit protein bS20.